The chain runs to 445 residues: Probable carboxypeptidase UREG_07869 (445 aa).

An N-terminal signal peptide occupies residues Met-1–Cys-17. Asp-165 serves as a coordination point for Zn(2+). Glu-197 acts as the Proton acceptor in catalysis. Glu-198 contacts Zn(2+).

The protein belongs to the peptidase M20A family. Requires Zn(2+) as cofactor.

It localises to the secreted. This is Probable carboxypeptidase UREG_07869 from Uncinocarpus reesii (strain UAMH 1704).